We begin with the raw amino-acid sequence, 410 residues long: Schlafen-like protein 1 (410 aa).

2 disordered regions span residues 1-20 and 141-199; these read MSLR…VMSQ and LHHR…SGVR. Polar residues predominate over residues 8–20; sequence AQTQMWESPVMSQ. The segment covering 154–173 has biased composition (pro residues); it reads SHSPGPSPGPSPGLRHPPLP. 264 to 271 contributes to the ATP binding site; it reads GVEDSGLV. The stretch at 370 to 401 forms a coiled coil; that stretch reads QKWAMELGKLEEKVKVLTLEKEQLQQQLRQRQ.

This sequence belongs to the Schlafen family. Subgroup I subfamily.

This chain is Schlafen-like protein 1 (Slfnl1), found in Mus musculus (Mouse).